Reading from the N-terminus, the 378-residue chain is Chaperone protein DnaJ (378 aa).

The J domain occupies 5–70; it reads DYYEVLSVSR…DKKAAYDQFG (66 aa). A CR-type zinc finger spans residues 133–211; it reads GLTKELRIPT…CHGEGRVEKS (79 aa). Zn(2+) contacts are provided by Cys-146, Cys-149, Cys-163, Cys-166, Cys-185, Cys-188, Cys-199, and Cys-202. 4 CXXCXGXG motif repeats span residues 146–153, 163–170, 185–192, and 199–206; these read CDSCDGSG, CGTCHGQG, CPTCHGRG, and CNKCHGEG.

Belongs to the DnaJ family. In terms of assembly, homodimer. It depends on Zn(2+) as a cofactor.

The protein resides in the cytoplasm. In terms of biological role, participates actively in the response to hyperosmotic and heat shock by preventing the aggregation of stress-denatured proteins and by disaggregating proteins, also in an autonomous, DnaK-independent fashion. Unfolded proteins bind initially to DnaJ; upon interaction with the DnaJ-bound protein, DnaK hydrolyzes its bound ATP, resulting in the formation of a stable complex. GrpE releases ADP from DnaK; ATP binding to DnaK triggers the release of the substrate protein, thus completing the reaction cycle. Several rounds of ATP-dependent interactions between DnaJ, DnaK and GrpE are required for fully efficient folding. Also involved, together with DnaK and GrpE, in the DNA replication of plasmids through activation of initiation proteins. This is Chaperone protein DnaJ from Shewanella sediminis (strain HAW-EB3).